The sequence spans 496 residues: ATP synthase subunit beta 1 (496 aa).

Residue 167–174 (GGAGVGKT) coordinates ATP. A disordered region spans residues 474-496 (REAAAAQQSTAQQAAPAEKEPAA). Over residues 476–489 (AAAAQQSTAQQAAP) the composition is skewed to low complexity.

The protein belongs to the ATPase alpha/beta chains family. F-type ATPases have 2 components, CF(1) - the catalytic core - and CF(0) - the membrane proton channel. CF(1) has five subunits: alpha(3), beta(3), gamma(1), delta(1), epsilon(1). CF(0) has three main subunits: a(1), b(2) and c(9-12). The alpha and beta chains form an alternating ring which encloses part of the gamma chain. CF(1) is attached to CF(0) by a central stalk formed by the gamma and epsilon chains, while a peripheral stalk is formed by the delta and b chains.

Its subcellular location is the cell inner membrane. It carries out the reaction ATP + H2O + 4 H(+)(in) = ADP + phosphate + 5 H(+)(out). Its function is as follows. Produces ATP from ADP in the presence of a proton gradient across the membrane. The catalytic sites are hosted primarily by the beta subunits. The chain is ATP synthase subunit beta 1 from Paraburkholderia xenovorans (strain LB400).